The chain runs to 570 residues: Urease subunit alpha (570 aa).

The Urease domain maps to 131 to 570; it reads GGMDSHIHFI…LPMAQRYFLF (440 aa). Ni(2+) contacts are provided by His136, His138, and Lys219. Residue Lys219 is modified to N6-carboxylysine. Substrate is bound at residue His221. Residues His248 and His274 each contribute to the Ni(2+) site. The Proton donor role is filled by His322. Ni(2+) is bound at residue Asp362.

Belongs to the metallo-dependent hydrolases superfamily. Urease alpha subunit family. Heterotrimer of UreA (gamma), UreB (beta) and UreC (alpha) subunits. Three heterotrimers associate to form the active enzyme. Requires Ni cation as cofactor. Post-translationally, carboxylation allows a single lysine to coordinate two nickel ions.

The protein resides in the cytoplasm. It carries out the reaction urea + 2 H2O + H(+) = hydrogencarbonate + 2 NH4(+). The protein operates within nitrogen metabolism; urea degradation; CO(2) and NH(3) from urea (urease route): step 1/1. In Rhizobium etli (strain ATCC 51251 / DSM 11541 / JCM 21823 / NBRC 15573 / CFN 42), this protein is Urease subunit alpha.